Here is a 374-residue protein sequence, read N- to C-terminus: Tryptophan--tRNA ligase (374 aa).

Residues Pro81 to His89 carry the 'HIGH' region motif. Residues Lys258–Ser262 carry the 'KMSKS' region motif.

Belongs to the class-I aminoacyl-tRNA synthetase family.

It localises to the cytoplasm. It carries out the reaction tRNA(Trp) + L-tryptophan + ATP = L-tryptophyl-tRNA(Trp) + AMP + diphosphate + H(+). This chain is Tryptophan--tRNA ligase, found in Pyrobaculum arsenaticum (strain DSM 13514 / JCM 11321 / PZ6).